A 421-amino-acid polypeptide reads, in one-letter code: Myb-related protein Pp2 (421 aa).

HTH myb-type domains lie at 9-61 (KVGL…TNYL) and 62-116 (RPDL…KKRL). 2 consecutive DNA-binding regions (H-T-H motif) follow at residues 37–61 (WRAI…TNYL) and 89–112 (WSRI…NTRL). The segment at 119-240 (QGLDPNTHLP…VTTKSHEDHR (122 aa)) is disordered. Residues 136-147 (DTEDDTDDEGGD) show a composition bias toward acidic residues.

The protein resides in the nucleus. Possible transcription activator. This is Myb-related protein Pp2 (PP2) from Physcomitrium patens (Spreading-leaved earth moss).